The following is an 808-amino-acid chain: Probable ATP-dependent helicase MJ1401 (808 aa).

Residues 189 to 217 carry the Q motif motif; sequence YKIDELDIPEELKEIIKSRGIEELLPVQT. The Helicase ATP-binding domain maps to 221 to 391; sequence KAGLLNGDDL…QLNAKLVLYN (171 aa). Position 234–241 (234–241) interacts with ATP; the sequence is SATSSGKT. A DEIH box motif is present at residues 336–339; it reads DEIH. Residues 396 to 585 form the Helicase C-terminal domain; it reads PLERHIIFCK…EDEEEEQILA (190 aa).

This sequence belongs to the DEAD box helicase family.

The chain is Probable ATP-dependent helicase MJ1401 from Methanocaldococcus jannaschii (strain ATCC 43067 / DSM 2661 / JAL-1 / JCM 10045 / NBRC 100440) (Methanococcus jannaschii).